Here is a 360-residue protein sequence, read N- to C-terminus: Glutamine synthetase (360 aa).

One can recognise a GS beta-grasp domain in the interval 26–105 (IMAEYIWIDA…VLSECWNADG (80 aa)). Positions 112-360 (YRHECAKLME…METIYGSVDN (249 aa)) constitute a GS catalytic domain.

It belongs to the glutamine synthetase family. As to quaternary structure, homooctamer.

It is found in the cytoplasm. The enzyme catalyses L-glutamate + NH4(+) + ATP = L-glutamine + ADP + phosphate + H(+). The polypeptide is Glutamine synthetase (GLN1) (Colletotrichum gloeosporioides (Anthracnose fungus)).